Here is a 446-residue protein sequence, read N- to C-terminus: Tol-Pal system protein TolB (446 aa).

The first 19 residues, 1–19, serve as a signal peptide directing secretion; sequence MLLRYLFILFIIIPIKAFA.

It belongs to the TolB family. In terms of assembly, the Tol-Pal system is composed of five core proteins: the inner membrane proteins TolA, TolQ and TolR, the periplasmic protein TolB and the outer membrane protein Pal. They form a network linking the inner and outer membranes and the peptidoglycan layer.

It localises to the periplasm. In terms of biological role, part of the Tol-Pal system, which plays a role in outer membrane invagination during cell division and is important for maintaining outer membrane integrity. The protein is Tol-Pal system protein TolB of Pelagibacter ubique (strain HTCC1062).